The sequence spans 621 residues: Replication factor A protein 1 (621 aa).

Residue Ser-2 is modified to N-acetylserine. Ser-178 bears the Phosphoserine; by ATM or ATR mark. A DNA-binding region (OB) is located at residues 197 to 284 (WTIKARVSYK…PYELNLDRDT (88 aa)). Residues 486–508 (CSNENCNKKVLEQPDGTWRCEKC) form a C4-type zinc finger.

It belongs to the replication factor A protein 1 family. As to quaternary structure, component of the heterotrimeric canonical replication protein A complex (RPA). Interacts with POB3. The N-terminus is blocked.

The protein resides in the nucleus. In terms of biological role, as part of the replication protein A (RPA/RP-A), a single-stranded DNA-binding heterotrimeric complex, may play an essential role in DNA replication, recombination and repair. Binds and stabilizes single-stranded DNA intermediates, preventing complementary DNA reannealing and recruiting different proteins involved in DNA metabolism. Binds to single-stranded sequences participating in DNA replication in addition to those mediating transcriptional repression (URS1) and activation (CAR1). Stimulates the activity of a cognate strand exchange protein (SEP1). It cooperates with T-AG and DNA topoisomerase I to unwind template DNA containing the simian virus 40 origin of DNA replication. The polypeptide is Replication factor A protein 1 (RFA1) (Saccharomyces cerevisiae (strain ATCC 204508 / S288c) (Baker's yeast)).